Reading from the N-terminus, the 1115-residue chain is Carbamoyl phosphate synthase large chain (1115 aa).

The interval 1–407 (MPRRTDLHHV…ALGKVMRSLE (407 aa)) is carboxyphosphate synthetic domain. Residues R134, R174, G180, G181, E213, I215, E220, G246, V247, H248, Q290, and E304 each coordinate ATP. Positions 138 to 333 (KDIVAKAGGE…IAKIAAKLAI (196 aa)) constitute an ATP-grasp 1 domain. Q290, E304, and N306 together coordinate Mg(2+). Positions 290, 304, and 306 each coordinate Mn(2+). The oligomerization domain stretch occupies residues 408 to 559 (TTRAGFWTAP…ELDPAAETEV (152 aa)). Residues 560 to 965 (APQTERPKVL…AFAKSQTAAY (406 aa)) are carbamoyl phosphate synthetic domain. Positions 693–884 (GDLLSAAGLP…LAKACARIML (192 aa)) constitute an ATP-grasp 2 domain. ATP is bound by residues R729, R768, L770, E775, G800, I801, H802, S803, Q843, and E855. Mg(2+) is bound by residues Q843, E855, and N857. Residues Q843, E855, and N857 each coordinate Mn(2+). Residues 966–1113 (GSLPAQGTVF…QELHRVIGGV (148 aa)) enclose the MGS-like domain. The segment at 966-1115 (GSLPAQGTVF…LHRVIGGVER (150 aa)) is allosteric domain.

The protein belongs to the CarB family. In terms of assembly, composed of two chains; the small (or glutamine) chain promotes the hydrolysis of glutamine to ammonia, which is used by the large (or ammonia) chain to synthesize carbamoyl phosphate. Tetramer of heterodimers (alpha,beta)4. Mg(2+) serves as cofactor. Requires Mn(2+) as cofactor.

It carries out the reaction hydrogencarbonate + L-glutamine + 2 ATP + H2O = carbamoyl phosphate + L-glutamate + 2 ADP + phosphate + 2 H(+). The catalysed reaction is hydrogencarbonate + NH4(+) + 2 ATP = carbamoyl phosphate + 2 ADP + phosphate + 2 H(+). Its pathway is amino-acid biosynthesis; L-arginine biosynthesis; carbamoyl phosphate from bicarbonate: step 1/1. It participates in pyrimidine metabolism; UMP biosynthesis via de novo pathway; (S)-dihydroorotate from bicarbonate: step 1/3. Large subunit of the glutamine-dependent carbamoyl phosphate synthetase (CPSase). CPSase catalyzes the formation of carbamoyl phosphate from the ammonia moiety of glutamine, carbonate, and phosphate donated by ATP, constituting the first step of 2 biosynthetic pathways, one leading to arginine and/or urea and the other to pyrimidine nucleotides. The large subunit (synthetase) binds the substrates ammonia (free or transferred from glutamine from the small subunit), hydrogencarbonate and ATP and carries out an ATP-coupled ligase reaction, activating hydrogencarbonate by forming carboxy phosphate which reacts with ammonia to form carbamoyl phosphate. The chain is Carbamoyl phosphate synthase large chain from Mycobacterium bovis (strain ATCC BAA-935 / AF2122/97).